A 217-amino-acid polypeptide reads, in one-letter code: MYGESLVKLMLALDVMDEKKAVLIAKETSEYVDSIKIGYPLVLATGLNIIDKIKEATNKEVICDFKVADIPSTNEKIAELTLNHADGIICQGFVGSDSVSAILNVGKAKNKKVIMVTEMSHPGATEYLQNVAEDMAKMADRLKVDGIVAPSTRPERLEEIKSIAKDAFVISPGVGAQGGNLSDVLNVLSENDYVIIGRAIYENENPKEMAKKYRMQM.

Residues D14, K36, 64-73 (DFKVADIPST), S120, 172-182 (PGVGAQGGNLS), G197, and R198 contribute to the substrate site. K66 serves as the catalytic Proton donor.

Belongs to the OMP decarboxylase family. Type 1 subfamily. As to quaternary structure, homodimer.

It catalyses the reaction orotidine 5'-phosphate + H(+) = UMP + CO2. It participates in pyrimidine metabolism; UMP biosynthesis via de novo pathway; UMP from orotate: step 2/2. Functionally, catalyzes the decarboxylation of orotidine 5'-monophosphate (OMP) to uridine 5'-monophosphate (UMP). The sequence is that of Orotidine 5'-phosphate decarboxylase from Methanococcus maripaludis (strain C6 / ATCC BAA-1332).